Consider the following 517-residue polypeptide: Cytochrome P450 monooxygenase penP (517 aa).

A helical transmembrane segment spans residues 17–37 (GEATVIWILVALVLVAYLILP). Residue cysteine 456 coordinates heme. N-linked (GlcNAc...) asparagine glycosylation occurs at asparagine 501.

Belongs to the cytochrome P450 family. Requires heme as cofactor.

Its subcellular location is the membrane. Its pathway is secondary metabolite biosynthesis. Functionally, cytochrome P450 monooxygenase; part of the gene cluster that mediates the biosynthesis of the indole diterpenes penitrems. The geranylgeranyl diphosphate (GGPP) synthase penG catalyzes the first step in penitrem biosynthesis via conversion of farnesyl pyrophosphate and isopentyl pyrophosphate into geranylgeranyl pyrophosphate (GGPP). Condensation of indole-3-glycerol phosphate with GGPP by the prenyl transferase penC then forms 3-geranylgeranylindole (3-GGI). Epoxidation by the FAD-dependent monooxygenase penM leads to a epoxidized-GGI that is substrate of the terpene cyclase penB for cyclization to yield paspaline. Paspaline is subsequently converted to 13-desoxypaxilline by the cytochrome P450 monooxygenase penP, the latter being then converted to paxilline by the cytochrome P450 monooxygenase penQ. Paxilline is converted to beta-paxitriol via C-10 ketoreduction by the short-chain dehydrogenase PC-15 which can be monoprenylated at the C-20 by the indole diterpene prenyltransferase penD. A two-step elimination (acetylation and elimination) process performed by the O-acetyltransferase PC-16 and the P.simplicissimum ptmI-ortholog not yet identified in P.crustosum, leads to the production of the prenylated form of penijanthine. The FAD-linked oxidoreductase ptmO then converts the prenylated form of penijanthine into PC-M5 which is in turn transformed into PC-M4 by the aromatic dimethylallyltransferase PC-22. A series of oxidation steps involving 4 cytochrome P450 monooxygenases (PC-21, PC-05, PC-23, PC-20) and a FAD-dependent monooxygenase (PC-14) are required for the transformation of PC-M4 to penitrems A and E. Synthesis of these final products is proposed to proceed via penitrems D and C (PC-21, PC-05, PC-14) and penitrems B and F (PC-21, PC-05, PC-14, PC-23). The polypeptide is Cytochrome P450 monooxygenase penP (Penicillium crustosum (Blue mold fungus)).